The chain runs to 389 residues: Flap endonuclease 1 (389 aa).

The interval M1–R105 is N-domain. Position 34 (D34) interacts with Mg(2+). A DNA-binding site is contributed by R71. D87, E159, E161, D180, and D182 together coordinate Mg(2+). An I-domain region spans residues E123–H254. E159 lines the DNA pocket. The DNA site is built by G232 and D234. Mg(2+) is bound at residue D234. The interaction with PCNA stretch occupies residues S338–F346. The segment at I356–N389 is disordered.

Belongs to the XPG/RAD2 endonuclease family. FEN1 subfamily. In terms of assembly, interacts with PCNA. Three molecules of FEN1 bind to one PCNA trimer with each molecule binding to one PCNA monomer. PCNA stimulates the nuclease activity without altering cleavage specificity. Requires Mg(2+) as cofactor. In terms of processing, phosphorylated. Phosphorylation upon DNA damage induces relocalization to the nuclear plasma.

It localises to the nucleus. Its subcellular location is the nucleolus. It is found in the nucleoplasm. The protein localises to the mitochondrion. Functionally, structure-specific nuclease with 5'-flap endonuclease and 5'-3' exonuclease activities involved in DNA replication and repair. During DNA replication, cleaves the 5'-overhanging flap structure that is generated by displacement synthesis when DNA polymerase encounters the 5'-end of a downstream Okazaki fragment. It enters the flap from the 5'-end and then tracks to cleave the flap base, leaving a nick for ligation. Also involved in the long patch base excision repair (LP-BER) pathway, by cleaving within the apurinic/apyrimidinic (AP) site-terminated flap. Acts as a genome stabilization factor that prevents flaps from equilibrating into structures that lead to duplications and deletions. Also possesses 5'-3' exonuclease activity on nicked or gapped double-stranded DNA, and exhibits RNase H activity. Also involved in replication and repair of rDNA and in repairing mitochondrial DNA. This is Flap endonuclease 1 from Ostreococcus lucimarinus (strain CCE9901).